We begin with the raw amino-acid sequence, 61 residues long: Large ribosomal subunit protein eL20 (61 aa).

This sequence belongs to the eukaryotic ribosomal protein eL20 family. Part of the 50S ribosomal subunit. Binds 23S rRNA.

This Methanosarcina mazei (strain ATCC BAA-159 / DSM 3647 / Goe1 / Go1 / JCM 11833 / OCM 88) (Methanosarcina frisia) protein is Large ribosomal subunit protein eL20.